The following is a 363-amino-acid chain: Flagellar P-ring protein (363 aa).

The signal sequence occupies residues 1 to 20 (MKYKLVLAVAVLVFSLPSQA).

It belongs to the FlgI family. In terms of assembly, the basal body constitutes a major portion of the flagellar organelle and consists of four rings (L,P,S, and M) mounted on a central rod.

It localises to the periplasm. Its subcellular location is the bacterial flagellum basal body. Its function is as follows. Assembles around the rod to form the L-ring and probably protects the motor/basal body from shearing forces during rotation. The protein is Flagellar P-ring protein of Shewanella baltica (strain OS223).